We begin with the raw amino-acid sequence, 505 residues long: Transcription factor APG (505 aa).

Disordered regions lie at residues 1-40 (MLRG…CSAA), 61-99 (GAAN…DTAP), 119-156 (PAAA…SGGG), 169-242 (PLQQ…APTT), 256-312 (AQRL…SQDE), 324-344 (RRSA…NLSE), and 469-505 (PPPP…VKQA). Residues 23 to 33 (PLRPPPPPPFQ) show a composition bias toward pro residues. The span at 131 to 144 (CSSSHGAVVPSTSA) shows a compositional bias: polar residues. Residues 174 to 199 (PSGGETASASASAAATSTVPVESTVV) show a composition bias toward low complexity. Over residues 200–212 (QAATNRLRSTPLF) the composition is skewed to polar residues. The span at 222–239 (PPKPSPRAAAPPPPPPLA) shows a compositional bias: pro residues. The segment covering 288-299 (GDRRQLNWRDSH) has biased composition (basic and acidic residues). Polar residues predominate over residues 300 to 310 (NNQSAEWSASQ). Residues 324–334 (RRSAARSSKRS) show a composition bias toward basic residues. Residues 335–344 (RTAEVHNLSE) show a composition bias toward basic and acidic residues. The 50-residue stretch at 335-384 (RTAEVHNLSERRRRDRINEKMRALQELIPNCNKIDKASMLEEAIEYLKTL) folds into the bHLH domain. Low complexity predominate over residues 492-505 (GAADAGNAPAVKQA).

It belongs to the bHLH protein family. As to quaternary structure, homodimer and heterodimer with ILI5 or ILI6.

The protein localises to the nucleus. Functionally, atypical bHLH transcription factor that acts as a negative regulator of grain size. Binds the transcription factor ILI6 and forms a heterodimer of antagonistic bHLH transcription factors that regulates grain length and weight by controlling cell elongation in lemma and palea. May be involved in the control of lamina inclination through brassinosteroid signaling pathway. This Oryza sativa subsp. japonica (Rice) protein is Transcription factor APG (APG).